Reading from the N-terminus, the 1388-residue chain is DNA-directed RNA polymerase subunit beta (1388 aa).

The protein belongs to the RNA polymerase beta chain family. As to quaternary structure, the RNAP catalytic core consists of 2 alpha, 1 beta, 1 beta' and 1 omega subunit. When a sigma factor is associated with the core the holoenzyme is formed, which can initiate transcription.

It carries out the reaction RNA(n) + a ribonucleoside 5'-triphosphate = RNA(n+1) + diphosphate. In terms of biological role, DNA-dependent RNA polymerase catalyzes the transcription of DNA into RNA using the four ribonucleoside triphosphates as substrates. The chain is DNA-directed RNA polymerase subunit beta from Stenotrophomonas maltophilia (strain K279a).